The primary structure comprises 354 residues: Mitogen-activated protein kinase kinase 1 (354 aa).

One can recognise a Protein kinase domain in the interval 68–328 (LEVIKVIGKG…AKELLEHKFV (261 aa)). ATP-binding positions include 74–82 (IGKGSSGNV) and K97. The Proton acceptor role is filled by D190. T218 carries the phosphothreonine modification. S224 is subject to Phosphoserine. Position 228 is a phosphothreonine (T228).

It belongs to the protein kinase superfamily. STE Ser/Thr protein kinase family. MAP kinase kinase subfamily. As to quaternary structure, interacts with MEKK1 and MPK4. May form a ternary complex composed of MEKK1 and MKK1/MKK2 and MPK4. Interacts with P.syringae type III effector HopF2. Interacts with MPK11. Phosphorylation at Thr-218 and Ser-224 by MAP kinase kinase kinases positively regulates kinase activity. Expressed in roots, stem, flowers and siliques.

The catalysed reaction is L-seryl-[protein] + ATP = O-phospho-L-seryl-[protein] + ADP + H(+). It carries out the reaction L-threonyl-[protein] + ATP = O-phospho-L-threonyl-[protein] + ADP + H(+). It catalyses the reaction L-tyrosyl-[protein] + ATP = O-phospho-L-tyrosyl-[protein] + ADP + H(+). Activated through serine and threonine phosphorylation in response to wounding, cold, drought, salt stresses, abscisic acid (ABA), hydrogen peroxide, bacterial flagellin and laminarin beta-glucan. Functionally, MEKK1, MKK1/MKK2 and MPK4/MPK6 function in a signaling pathway that modulates the expression of genes responding to biotic and abiotic stresses and also plays an important role in pathogen defense by negatively regulating innate immunity. Activates by phosphorylation the downstream MPK4. Acts redundantly with MKK2. MKK1-MPK6 module mediates abscisic acid (ABA)-dependent CAT1 expression with H(2)O(2) production and response to drought and salt stress. MKK1-MPK6 module is also involved in sugar signaling during the process of seed germination. This Arabidopsis thaliana (Mouse-ear cress) protein is Mitogen-activated protein kinase kinase 1 (MKK1).